The chain runs to 484 residues: Protein nucleotidyltransferase YdiU (484 aa).

Positions 81, 83, 84, 103, 115, 116, 166, and 173 each coordinate ATP. Asp-244 serves as the catalytic Proton acceptor. Residues Asn-245 and Asp-254 each coordinate Mg(2+). Asp-254 serves as a coordination point for ATP.

Belongs to the SELO family. Requires Mg(2+) as cofactor. Mn(2+) is required as a cofactor.

It carries out the reaction L-seryl-[protein] + ATP = 3-O-(5'-adenylyl)-L-seryl-[protein] + diphosphate. The enzyme catalyses L-threonyl-[protein] + ATP = 3-O-(5'-adenylyl)-L-threonyl-[protein] + diphosphate. It catalyses the reaction L-tyrosyl-[protein] + ATP = O-(5'-adenylyl)-L-tyrosyl-[protein] + diphosphate. The catalysed reaction is L-histidyl-[protein] + UTP = N(tele)-(5'-uridylyl)-L-histidyl-[protein] + diphosphate. It carries out the reaction L-seryl-[protein] + UTP = O-(5'-uridylyl)-L-seryl-[protein] + diphosphate. The enzyme catalyses L-tyrosyl-[protein] + UTP = O-(5'-uridylyl)-L-tyrosyl-[protein] + diphosphate. In terms of biological role, nucleotidyltransferase involved in the post-translational modification of proteins. It can catalyze the addition of adenosine monophosphate (AMP) or uridine monophosphate (UMP) to a protein, resulting in modifications known as AMPylation and UMPylation. The polypeptide is Protein nucleotidyltransferase YdiU (Shewanella baltica (strain OS195)).